The primary structure comprises 173 residues: uncharacterized protein (173 aa).

The segment covering 1–11 (MLCAKNKKDPK) has biased composition (basic and acidic residues). The tract at residues 1 to 173 (MLCAKNKKDP…EKMEKSEKAY (173 aa)) is disordered. Over residues 17-41 (FSETSKVQNVQNTQPKPAAPSQMSI) the composition is skewed to polar residues. Composition is skewed to basic and acidic residues over residues 56-109 (KSVE…KADN) and 120-144 (AKKEQEEENPKTDLESHKDEAEAKK). Residues 145-156 (KESRRQKKMRNK) are compositionally biased toward basic residues. Basic and acidic residues predominate over residues 157–173 (NSKEGSVEKMEKSEKAY).

This is an uncharacterized protein from Caenorhabditis elegans.